A 208-amino-acid chain; its full sequence is Thymidylate kinase (208 aa).

Residue 10–17 participates in ATP binding; that stretch reads GPEGSGKT.

Belongs to the thymidylate kinase family.

It catalyses the reaction dTMP + ATP = dTDP + ADP. Its function is as follows. Phosphorylation of dTMP to form dTDP in both de novo and salvage pathways of dTTP synthesis. The polypeptide is Thymidylate kinase (Bacillus cereus (strain ATCC 14579 / DSM 31 / CCUG 7414 / JCM 2152 / NBRC 15305 / NCIMB 9373 / NCTC 2599 / NRRL B-3711)).